The chain runs to 154 residues: 6,7-dimethyl-8-ribityllumazine synthase (154 aa).

Residues Phe22, 57–59, and 81–83 contribute to the 5-amino-6-(D-ribitylamino)uracil site; these read AYE and AVI. 86–87 contacts (2S)-2-hydroxy-3-oxobutyl phosphate; that stretch reads GT. His89 (proton donor) is an active-site residue. A 5-amino-6-(D-ribitylamino)uracil-binding site is contributed by Phe114. Arg128 lines the (2S)-2-hydroxy-3-oxobutyl phosphate pocket.

The protein belongs to the DMRL synthase family. In terms of assembly, forms an icosahedral capsid composed of 60 subunits, arranged as a dodecamer of pentamers.

The enzyme catalyses (2S)-2-hydroxy-3-oxobutyl phosphate + 5-amino-6-(D-ribitylamino)uracil = 6,7-dimethyl-8-(1-D-ribityl)lumazine + phosphate + 2 H2O + H(+). The protein operates within cofactor biosynthesis; riboflavin biosynthesis; riboflavin from 2-hydroxy-3-oxobutyl phosphate and 5-amino-6-(D-ribitylamino)uracil: step 1/2. Functionally, catalyzes the formation of 6,7-dimethyl-8-ribityllumazine by condensation of 5-amino-6-(D-ribitylamino)uracil with 3,4-dihydroxy-2-butanone 4-phosphate. This is the penultimate step in the biosynthesis of riboflavin. The chain is 6,7-dimethyl-8-ribityllumazine synthase from Idiomarina loihiensis (strain ATCC BAA-735 / DSM 15497 / L2-TR).